The primary structure comprises 169 residues: MAKGSGRAKAAGGKGGSKQIIATNRKARHNYSIIETYEAGVALQGTEVKSLREGQASLADAFATIDDGEVWLRNLYIPEYQHGSWTNHDPRRNRKLLLHRQQIDRLVGKIRDGNLALMPLSLYFSEGKVKVELALARGKKAYDKRQDLAQRDAQREVVRQLGRRTKGMI.

This sequence belongs to the SmpB family.

It is found in the cytoplasm. Functionally, required for rescue of stalled ribosomes mediated by trans-translation. Binds to transfer-messenger RNA (tmRNA), required for stable association of tmRNA with ribosomes. tmRNA and SmpB together mimic tRNA shape, replacing the anticodon stem-loop with SmpB. tmRNA is encoded by the ssrA gene; the 2 termini fold to resemble tRNA(Ala) and it encodes a 'tag peptide', a short internal open reading frame. During trans-translation Ala-aminoacylated tmRNA acts like a tRNA, entering the A-site of stalled ribosomes, displacing the stalled mRNA. The ribosome then switches to translate the ORF on the tmRNA; the nascent peptide is terminated with the 'tag peptide' encoded by the tmRNA and targeted for degradation. The ribosome is freed to recommence translation, which seems to be the essential function of trans-translation. The protein is SsrA-binding protein of Mycolicibacterium paratuberculosis (strain ATCC BAA-968 / K-10) (Mycobacterium paratuberculosis).